Reading from the N-terminus, the 225-residue chain is UPF0758 protein XCV4028 (225 aa).

The MPN domain occupies 102 to 224 (ALSDPPSVGR…PVSFAERGWL (123 aa)). Zn(2+) is bound by residues H173, H175, and D186. The JAMM motif signature appears at 173 to 186 (HNHPSGNPEPSEAD).

It belongs to the UPF0758 family.

This Xanthomonas euvesicatoria pv. vesicatoria (strain 85-10) (Xanthomonas campestris pv. vesicatoria) protein is UPF0758 protein XCV4028.